The primary structure comprises 981 residues: MSPLKIHGPIRIRSMQTGITKWKEGSFEVVEKENKVSLVVHYNTGGIPRIFQLSHNIKNVVLRPSGAKQSRLMLTLQDNSFLSIDKVPSKDAEEMRLFLDAVHQNRLNAAMKPSQGSGSFGAILGSRTSQKETNRQLSYSDNQVSSKRGSLETKDDTPFRKVLGNPSRGSIKAAAGNGVTPARTIPSLTSTSTPLRSGLLENRTEKRKRMLSSGSELNEDYPKENDSSSNNKAMTDPSRKYLTSSREKQLSLKQSEENRTSGLLPLQSSSFYGSRTAAKDYSPGSTNLDRTNISSQTPSAKRSLGFLPQPAPLSVKKLRCNQDYTGWNKPRVPLSSHQQQQLQGFSNLGNTCYMNAILQSLFSLQSFANDLLKQGIPWKKIPLNALIRRFAHLLVKKDICNSETKKDLLKKVKNAISATAERFSGYMQNDAHEFLSQCLDQLKEDMEKLNKTWKIEPVPGEENSPDISATRVYTCPVITNLEFEVQHSIICKVCGEIIPKREQFNDLSIDLPRRKKPLPPRSIQDSLDLFFRAEELEYSCEKCGGKCALVRHKFNRLPRILILHLKRYSFNVALSLNNKIGQQVIIPRYLTLSSHCTENTKPPFNLGWSAQMAVSRPLKASQMVNSCITSPSTPSKNFTFKSKTSLALSLDSDSEDELKRSVALSHRLCEMSGSEQQQEDLEKDSKSCRIEPDKSELENSGFDGMSEEELLAAVLEISKREASPSLSHEDDDKPTSSPDTGFAEDDIQEMPENPDSVETEKPKTITEPDPASFTEITKDCDENKENKTPEGSQGEVDWLQQYDMEREREEQELQQALAQSLQEQEAWEQKEDDDLKRATELSLQEFNNSFVDSLGSDEDSGNEDVLDMEYTEAEAEELKRNAETGNLPHSYRLISVVSHIGSTSSSGHYISDVYDIKKQAWFTYNDLEVSKIQEASVQSDRDRSGYIFFYMHKEIFDELLETEKNSQALNLEVGKTTRQVS.

The KEN box 1 signature appears at 32–34 (KEN). Short sequence motifs (D-box) lie at residues 71-79 (RLMLTLQDN) and 96-105 (RLFLDAVHQN). A disordered region spans residues 111-306 (MKPSQGSGSF…TPSAKRSLGF (196 aa)). Serine 114 is subject to Phosphoserine. Residues 135–148 (RQLSYSDNQVSSKR) are compositionally biased toward polar residues. Basic and acidic residues predominate over residues 149–159 (GSLETKDDTPF). A D-box 3 motif is present at residues 160-168 (RKVLGNPSR). The residue at position 170 (serine 170) is a Phosphoserine. Low complexity predominate over residues 183–200 (RTIPSLTSTSTPLRSGLL). Phosphoserine is present on serine 212. The short motif at 223-225 (KEN) is the KEN box 2 element. Positions 245 to 259 (SREKQLSLKQSEENR) are enriched in basic and acidic residues. Over residues 283–300 (PGSTNLDRTNISSQTPSA) the composition is skewed to polar residues. The 611-residue stretch at 343 to 953 (QGFSNLGNTC…SGYIFFYMHK (611 aa)) folds into the USP domain. Cysteine 352 functions as the Nucleophile in the catalytic mechanism. Serine 630 carries the phosphoserine; by CDK2 modification. Phosphoserine is present on residues serine 652 and serine 654. 2 disordered regions span residues 670–705 (EMSG…FDGM) and 721–797 (EASP…GEVD). Basic and acidic residues-rich tracts occupy residues 683–697 (KDSK…KSEL) and 721–734 (EASP…DDKP). In terms of domain architecture, UIM 1 spans 706–725 (SEEELLAAVLEISKREASPS). Serine 772 is subject to Phosphoserine. Over residues 776–788 (ITKDCDENKENKT) the composition is skewed to basic and acidic residues. The KEN box 3 signature appears at 784-786 (KEN). UIM domains follow at residues 808–827 (REEQ…QEAW) and 830–849 (KEDD…FNNS). Histidine 908 serves as the catalytic Proton acceptor.

Belongs to the peptidase C19 family. In terms of assembly, interacts with FZR1/CDH1. Interacts with CDT1. Post-translationally, polyubiquitinated via 'Lys-11'-linked ubiquitin by the APC(CDH1) complex during late mitosis, leading to its degradation. Able to mediate auto-deubiquitination. In terms of processing, phosphorylated at Ser-630 by CDK2 during G1/S phase but not during mitosis; phosphorylation at Ser-630 is required for deubiquitinase activity. Also polyubiquitinated during early G1 phase, without leading to degradation. Phosphorylated at Ser-114 by ATM following DNA damage, which in turn increases its deubiquitination activity towards BLM.

The protein resides in the nucleus. Its subcellular location is the chromosome. It carries out the reaction Thiol-dependent hydrolysis of ester, thioester, amide, peptide and isopeptide bonds formed by the C-terminal Gly of ubiquitin (a 76-residue protein attached to proteins as an intracellular targeting signal).. Its function is as follows. Deubiquitinase that plays a role in different processes including cell cycle regulation, DNA replication or DNA damage response. Antagonizes the anaphase-promoting complex (APC/C) during G1/S transition by mediating deubiquitination of cyclin-A (CCNA1 and CCNA2), thereby promoting S phase entry. Specifically mediates deubiquitination of 'Lys-11'-linked polyubiquitin chains, a specific ubiquitin-linkage type mediated by the APC/C complex. Phosphorylation at Ser-628 during G1/S phase maximizes the deubiquitinase activity, leading to prevent degradation of cyclin-A (CCNA1 and CCNA2). Plays an important role in the regulation of DNA replication by stabilizing the licensing factor CDT1. Also plays an essential role beyond S-phase entry to promote the efficiency and fidelity of replication by deubiquitinating checkpoint kinase 1/CHK1, promoting its stability. Sustains the DNA damage response (DDR) by deubiquitinating and stabilizing the ATP-dependent DNA helicase BLM. Mechanistically, DNA double-strand breaks (DSB) promotes ATM-mediated phosphorylation of USP37 and enhances the binding between USP37 and BLM. Promotes cell migration by deubiquitinating and stabilizing the epithelial-mesenchymal transition (EMT)-inducing transcription factor SNAI. Plays a role in the regulation of mitotic spindle assembly and mitotic progression by associating with chromatin-associated WAPL and stabilizing it through deubiquitination. The polypeptide is Ubiquitin carboxyl-terminal hydrolase 37 (USP37) (Bos taurus (Bovine)).